Consider the following 412-residue polypeptide: Probable histone-binding protein rba-1 (412 aa).

WD repeat units follow at residues 117–157 (NHPG…SEPK), 169–209 (GHEG…TISG), 219–259 (GHSS…PQLT), 262–302 (GHTA…KKMY), 306–346 (HHND…DPSS), and 365–405 (GHTG…VSSE).

It belongs to the WD repeat RBAP46/RBAP48/MSI1 family. In terms of assembly, binds directly to helix 1 of the histone fold of histone H4, a region that is not accessible when H4 is in chromatin. Interacts with zft-11; the interaction is required to suppress the activation of non-neuronal genes in neurons.

Its subcellular location is the nucleus. Core histone-binding subunit that may target chromatin assembly factors, chromatin remodeling factors and histone deacetylases to their histone substrates in a manner that is regulated by nucleosomal DNA. Plays a role in regulating cell cycle progression. Required to repress the induction of vulval development by Ras signaling. In association with the zinc finger protein ztf-11, negatively regulates the expression of non-neuronal genes during neurogenesis. The polypeptide is Probable histone-binding protein rba-1 (Caenorhabditis elegans).